A 235-amino-acid polypeptide reads, in one-letter code: Endonuclease V (235 aa).

Residues aspartate 45 and aspartate 115 each coordinate Mg(2+).

Belongs to the endonuclease V family. Mg(2+) serves as cofactor.

It localises to the cytoplasm. The enzyme catalyses Endonucleolytic cleavage at apurinic or apyrimidinic sites to products with a 5'-phosphate.. In terms of biological role, DNA repair enzyme involved in the repair of deaminated bases. Selectively cleaves double-stranded DNA at the second phosphodiester bond 3' to a deoxyinosine leaving behind the intact lesion on the nicked DNA. The polypeptide is Endonuclease V (Bacillus thuringiensis subsp. konkukian (strain 97-27)).